The chain runs to 832 residues: Mucosa-associated lymphoid tissue lymphoma translocation protein 1 homolog (832 aa).

Residues 1 to 39 (MSLWGQPLQASPPLAVRQPPTASSGPSTSPPAGATLNRL) are disordered. Ser-2 is subject to N-acetylserine. A compositionally biased stretch (low complexity) spans 19–39 (PPTASSGPSTSPPAGATLNRL). The 88-residue stretch at 45-132 (RRLSESLDRA…EVLPLLNPPG (88 aa)) folds into the Death domain. 2 consecutive Ig-like C2-type domains span residues 131–207 (PGLK…FEFS) and 218–314 (AEVT…KKAE). The residue at position 141 (Ser-141) is a Phosphoserine. Cystine bridges form between Cys-154-Cys-196 and Cys-257-Cys-299. Residues 356–570 (IGNMSYWEHP…SLSEKRALTD (215 aa)) form a caspase-like region. A Nuclear export signal motif is present at residues 377-384 (LTNLLRQL). Catalysis depends on residues His-423 and Cys-472.

The protein belongs to the peptidase C14B family. In terms of assembly, homooligomer; forms oligomers which bind to TRAF6. Forms a complex with CARD14 and MALT1; resulting in the formation of a CBM (CARD14-BCL10-MALT1) complex. Forms a complex with CARD11 and MALT1; resulting in the formation of a CBM (CARD11-BCL10-MALT1) complex. Forms a complex with CARD9 and MALT1; resulting in the formation of a CBM (CARD9-BCL10-MALT1) complex.

The protein resides in the cytoplasm. It localises to the perinuclear region. It is found in the nucleus. Functionally, protease that enhances BCL10-induced activation: acts via formation of CBM complexes that channel adaptive and innate immune signaling downstream of CARD domain-containing proteins (CARD9, CARD11 and CARD14) to activate NF-kappa-B and MAP kinase p38 pathways which stimulate expression of genes encoding pro-inflammatory cytokines and chemokines. Mediates BCL10 cleavage: MALT1-dependent BCL10 cleavage plays an important role in T-cell antigen receptor-induced integrin adhesion. Involved in the induction of T helper 17 cells (Th17) differentiation. Cleaves RC3H1 and ZC3H12A in response to T-cell receptor (TCR) stimulation which releases their cooperatively repressed targets to promote Th17 cell differentiation. Also mediates cleavage of N4BP1 in T-cells following TCR-mediated activation, leading to N4BP1 inactivation. May also have ubiquitin ligase activity: binds to TRAF6, inducing TRAF6 oligomerization and activation of its ligase activity. The protein is Mucosa-associated lymphoid tissue lymphoma translocation protein 1 homolog of Mus musculus (Mouse).